Here is a 285-residue protein sequence, read N- to C-terminus: HTH-type transcriptional regulator MurR (285 aa).

The 77-residue stretch at 1 to 77 (MLYLTKIRNA…MALIGEYSAS (77 aa)) folds into the HTH rpiR-type domain. Positions 37-56 (SRKMAKLLGISQSSIVKFAQ) form a DNA-binding region, H-T-H motif. Residues 128–268 (IIEAISKAPF…FVGLVQLNDV (141 aa)) form the SIS domain.

As to quaternary structure, homotetramer.

The protein operates within amino-sugar metabolism; N-acetylmuramate degradation [regulation]. Represses the expression of the murPQ operon involved in the uptake and degradation of N-acetylmuramic acid (MurNAc). Binds to two adjacent inverted repeats within the operator region. MurNAc 6-phosphate, the substrate of MurQ, is the specific inducer that weakens binding of MurR to the operator. The protein is HTH-type transcriptional regulator MurR of Escherichia coli O17:K52:H18 (strain UMN026 / ExPEC).